The primary structure comprises 150 residues: Large ribosomal subunit protein eL19 (150 aa).

The segment at 56-89 (KGQSRARARAFQEARKKGRHRGPGSKKGKKTARM) is disordered. Positions 71-89 (KKGRHRGPGSKKGKKTARM) are enriched in basic residues.

This sequence belongs to the eukaryotic ribosomal protein eL19 family. In terms of assembly, part of the 50S ribosomal subunit.

Its function is as follows. Binds to the 23S rRNA. This Thermococcus kodakarensis (strain ATCC BAA-918 / JCM 12380 / KOD1) (Pyrococcus kodakaraensis (strain KOD1)) protein is Large ribosomal subunit protein eL19.